Reading from the N-terminus, the 379-residue chain is Eukaryotic translation initiation factor 3 subunit M (379 aa).

One can recognise a PCI domain in the interval 179 to 341; it reads RSEEASKVMI…RKVIISSVAQ (163 aa).

This sequence belongs to the eIF-3 subunit M family. Component of the eukaryotic translation initiation factor 3 (eIF-3) complex.

The protein localises to the cytoplasm. Functionally, component of the eukaryotic translation initiation factor 3 (eIF-3) complex, which is involved in protein synthesis of a specialized repertoire of mRNAs and, together with other initiation factors, stimulates binding of mRNA and methionyl-tRNAi to the 40S ribosome. The eIF-3 complex specifically targets and initiates translation of a subset of mRNAs involved in cell proliferation. The chain is Eukaryotic translation initiation factor 3 subunit M from Nematostella vectensis (Starlet sea anemone).